We begin with the raw amino-acid sequence, 597 residues long: Adenine deaminase (597 aa).

It belongs to the metallo-dependent hydrolases superfamily. Adenine deaminase family. The cofactor is Mn(2+).

It catalyses the reaction adenine + H2O + H(+) = hypoxanthine + NH4(+). The sequence is that of Adenine deaminase from Paracoccus denitrificans (strain Pd 1222).